The primary structure comprises 237 residues: Uridylate kinase (237 aa).

ATP is bound at residue 11–14 (KLSG). Gly-53 is a UMP binding site. Positions 54 and 58 each coordinate ATP. UMP-binding positions include Asp-73 and 134 to 141 (TGNPFFTT). Positions 161, 167, and 170 each coordinate ATP.

The protein belongs to the UMP kinase family. As to quaternary structure, homohexamer.

It localises to the cytoplasm. It carries out the reaction UMP + ATP = UDP + ADP. It functions in the pathway pyrimidine metabolism; CTP biosynthesis via de novo pathway; UDP from UMP (UMPK route): step 1/1. Its activity is regulated as follows. Inhibited by UTP. Its function is as follows. Catalyzes the reversible phosphorylation of UMP to UDP. The sequence is that of Uridylate kinase from Burkholderia ambifaria (strain ATCC BAA-244 / DSM 16087 / CCUG 44356 / LMG 19182 / AMMD) (Burkholderia cepacia (strain AMMD)).